Consider the following 356-residue polypeptide: Heparan sulfate 2-O-sulfotransferase 1 (356 aa).

The Cytoplasmic segment spans residues 1 to 11; it reads MGLLRIMMPPK. The helical; Signal-anchor for type II membrane protein transmembrane segment at 12-28 threads the bilayer; that stretch reads LQLLAVVAFAVAMLFLE. The stretch at 24–51 forms a coiled coil; it reads MLFLENQIQKLEESRAKLERAIARHEVR. Topologically, residues 29–356 are lumenal; sequence NQIQKLEESR…FYEKIYPKSN (328 aa). 6 residues coordinate adenosine 3',5'-bisphosphate: Lys83, Thr84, Ala85, Ser86, Thr87, and Ser88. Asn108 and Asn127 each carry an N-linked (GlcNAc...) asparagine glycan. Active-site residues include His140 and His142. 2 residues coordinate adenosine 3',5'-bisphosphate: Arg164 and Ser172. 2 cysteine pairs are disulfide-bonded: Cys201/Cys209 and Cys222/Cys228. Positions 279, 285, 290, and 293 each coordinate adenosine 3',5'-bisphosphate.

The protein belongs to the sulfotransferase 3 family. In terms of assembly, homotrimer. Interacts with the C5-epimerase GLCE. In terms of processing, N-glycosylated.

It is found in the golgi apparatus membrane. In terms of biological role, catalyzes the transfer of a sulfo group from 3'-phospho-5'-adenylyl sulfate (PAPS) to the 2-OH position of iduronic acid (IdoA) or glucuronic acid (GlcA) within the heparan sulfate (HS) chain and participates in HS biosynthesis. Required for metanephric development of kidney formation, suggesting that 2-O-sulfation within HS is essential for signaling between ureteric bud and metanephric mesenchyme. This is Heparan sulfate 2-O-sulfotransferase 1 from Cricetulus griseus (Chinese hamster).